Reading from the N-terminus, the 455-residue chain is Trigger factor (455 aa).

Positions 169–262 (GDVAIVDYEG…VKELKAKELP (94 aa)) constitute a PPIase FKBP-type domain.

The protein belongs to the FKBP-type PPIase family. Tig subfamily.

The protein resides in the cytoplasm. It carries out the reaction [protein]-peptidylproline (omega=180) = [protein]-peptidylproline (omega=0). In terms of biological role, involved in protein export. Acts as a chaperone by maintaining the newly synthesized protein in an open conformation. Functions as a peptidyl-prolyl cis-trans isomerase. The polypeptide is Trigger factor (Rippkaea orientalis (strain PCC 8801 / RF-1) (Cyanothece sp. (strain PCC 8801))).